The chain runs to 236 residues: SERTA domain-containing protein 1 (236 aa).

The region spanning 38–85 is the SERTA domain; sequence PTVASSSLFDLSVVKLHHSLRQSEPDLRHLVLVVNTLRRIQASMEPAP. Positions 190 to 211 are disordered; the sequence is ASEGLKPGPENGPAKEEPPELD.

In terms of assembly, interacts with the PHD-bromodomain of TIF1, TRIM28/TIF1B and p300/CBP. Interacts with E2F1 and TFDP1; modulates transactivation activity of TFDP1/E2F complexes. Also interacts with CDK4. In terms of processing, polyubiquitinated, which promotes proteasomal degradation. Detected at in testis, lung and, at lower levels, in muscle, liver, spleen, brain and heart.

In terms of biological role, acts at E2F-responsive promoters as coregulator to integrate signals provided by PHD- and/or bromodomain-containing transcription factors. Stimulates E2F1/TFDP1 transcriptional activity. Renders the activity of cyclin D1/CDK4 resistant to the inhibitory effects of CDKN2A/p16INK4A. This chain is SERTA domain-containing protein 1 (Sertad1), found in Mus musculus (Mouse).